The sequence spans 683 residues: Methionine--tRNA ligase (683 aa).

Positions 14-24 match the 'HIGH' region motif; the sequence is PYANGSIHLGH. Zn(2+)-binding residues include Cys145, Cys148, Cys158, and Cys161. The 'KMSKS' region signature appears at 331-335; the sequence is KMSKS. Lys334 is a binding site for ATP. Residues 545–572 are disordered; the sequence is ASKEDLTASQTDTGAAAPAGNGELAKDP. One can recognise a tRNA-binding domain in the interval 581–683; that stretch reads TFAAVDLRVA…SGAKPGQRIK (103 aa).

Belongs to the class-I aminoacyl-tRNA synthetase family. MetG type 1 subfamily. In terms of assembly, homodimer. The cofactor is Zn(2+).

It localises to the cytoplasm. The enzyme catalyses tRNA(Met) + L-methionine + ATP = L-methionyl-tRNA(Met) + AMP + diphosphate. Functionally, is required not only for elongation of protein synthesis but also for the initiation of all mRNA translation through initiator tRNA(fMet) aminoacylation. The sequence is that of Methionine--tRNA ligase from Pseudomonas fluorescens (strain Pf0-1).